The following is a 118-amino-acid chain: Large ribosomal subunit protein uL22c (118 aa).

Belongs to the universal ribosomal protein uL22 family. Part of the 50S ribosomal subunit.

The protein resides in the plastid. It localises to the organellar chromatophore. In terms of biological role, this protein binds specifically to 23S rRNA. Its function is as follows. The globular domain of the protein is located near the polypeptide exit tunnel on the outside of the subunit, while an extended beta-hairpin is found that lines the wall of the exit tunnel in the center of the 70S ribosome. In Paulinella chromatophora, this protein is Large ribosomal subunit protein uL22c (rpl22).